Consider the following 154-residue polypeptide: Large ribosomal subunit protein uL30 (154 aa).

This sequence belongs to the universal ribosomal protein uL30 family. Part of the 50S ribosomal subunit.

The protein is Large ribosomal subunit protein uL30 of Methanococcus maripaludis (strain DSM 14266 / JCM 13030 / NBRC 101832 / S2 / LL).